A 115-amino-acid polypeptide reads, in one-letter code: DPPPAIGREVDCSSYKGKGSQIACPRHLQPICGTDHNTYSNECMFCALTLNKEFEVRKLQDTACDIECTEYSDMCTMDYRPLCGSDGKNYSNKCIFCNAVVRSRGTIFLAKHGEC.

2 Kazal-like domains span residues 6 to 66 (IGRE…ACDI) and 67 to 115 (ECTE…HGEC). Intrachain disulfides connect C12–C46, C24–C43, C32–C64, C68–C97, C75–C94, and C83–C115.

Its subcellular location is the secreted. Its function is as follows. This inhibitor is composed of two homologous actively inhibiting halves: one which inhibits trypsin, the other which inhibits elastase. This is Double-headed protease inhibitor, submandibular gland from Vulpes vulpes (Red fox).